A 443-amino-acid polypeptide reads, in one-letter code: UDP-N-acetylmuramate--L-alanine ligase (443 aa).

111 to 117 (GAHGKTS) contributes to the ATP binding site.

This sequence belongs to the MurCDEF family.

It is found in the cytoplasm. It carries out the reaction UDP-N-acetyl-alpha-D-muramate + L-alanine + ATP = UDP-N-acetyl-alpha-D-muramoyl-L-alanine + ADP + phosphate + H(+). It participates in cell wall biogenesis; peptidoglycan biosynthesis. Cell wall formation. This chain is UDP-N-acetylmuramate--L-alanine ligase, found in Levilactobacillus brevis (strain ATCC 367 / BCRC 12310 / CIP 105137 / JCM 1170 / LMG 11437 / NCIMB 947 / NCTC 947) (Lactobacillus brevis).